Reading from the N-terminus, the 170-residue chain is Acetyl-CoA decarbonylase/synthase complex subunit epsilon 1 (170 aa).

This sequence belongs to the CdhB family. As to quaternary structure, heterotetramer of two alpha and two epsilon subunits. The ACDS complex is made up of alpha, epsilon, beta, gamma and delta subunits with a probable stoichiometry of (alpha(2)epsilon(2))(4)-beta(8)-(gamma(1)delta(1))(8).

It functions in the pathway one-carbon metabolism; methanogenesis from acetate. Functionally, part of a complex that catalyzes the reversible cleavage of acetyl-CoA, allowing growth on acetate as sole source of carbon and energy. The alpha-epsilon subcomponent functions as a carbon monoxide dehydrogenase. The precise role of the epsilon subunit is unclear; it may have a stabilizing role within the alpha(2)epsilon(2) component and/or be involved in electron transfer to FAD during a potential FAD-mediated CO oxidation. This chain is Acetyl-CoA decarbonylase/synthase complex subunit epsilon 1 (cdhB1), found in Methanosarcina thermophila.